A 480-amino-acid polypeptide reads, in one-letter code: Protein nucleotidyltransferase YdiU (480 aa).

ATP contacts are provided by G86, G88, R89, K109, D121, G122, R172, and R179. D248 serves as the catalytic Proton acceptor. Mg(2+) is bound by residues N249 and D258. D258 serves as a coordination point for ATP.

This sequence belongs to the SELO family. It depends on Mg(2+) as a cofactor. Mn(2+) serves as cofactor.

The catalysed reaction is L-seryl-[protein] + ATP = 3-O-(5'-adenylyl)-L-seryl-[protein] + diphosphate. It catalyses the reaction L-threonyl-[protein] + ATP = 3-O-(5'-adenylyl)-L-threonyl-[protein] + diphosphate. The enzyme catalyses L-tyrosyl-[protein] + ATP = O-(5'-adenylyl)-L-tyrosyl-[protein] + diphosphate. It carries out the reaction L-histidyl-[protein] + UTP = N(tele)-(5'-uridylyl)-L-histidyl-[protein] + diphosphate. The catalysed reaction is L-seryl-[protein] + UTP = O-(5'-uridylyl)-L-seryl-[protein] + diphosphate. It catalyses the reaction L-tyrosyl-[protein] + UTP = O-(5'-uridylyl)-L-tyrosyl-[protein] + diphosphate. In terms of biological role, nucleotidyltransferase involved in the post-translational modification of proteins. It can catalyze the addition of adenosine monophosphate (AMP) or uridine monophosphate (UMP) to a protein, resulting in modifications known as AMPylation and UMPylation. The chain is Protein nucleotidyltransferase YdiU from Enterobacter sp. (strain 638).